A 750-amino-acid polypeptide reads, in one-letter code: Pesticidal crystal protein Cry11Bb (750 aa).

Residues 672-750 form a disordered region; it reads QGYNDNYNQN…NYNQNTSSGV (79 aa).

It belongs to the delta endotoxin family.

Promotes colloidosmotic lysis by binding to the midgut epithelial cells of mosquito larvae such as Aedes aegypti, Anopheles albimanus and Culex quinquefasciatus. This is Pesticidal crystal protein Cry11Bb (cry11Bb) from Bacillus thuringiensis subsp. medellin.